The sequence spans 226 residues: Matrix protein (226 aa).

The dynamin binding motif lies at 2-4 (KSL). The PPXY motif motif lies at 28 to 31 (PPSY). The PTAP/PSAP motif signature appears at 40-43 (PSAP).

Belongs to the vesiculoviruses matrix protein family. Homomultimer. Interacts with viral nucleocapsid; this interaction contributes to the virion assembly. Interacts with the viral envelope glycoprotein; this interaction contributes to the virion assembly. Interacts with host RAE1-NUP98 complex. Interacts with host NEDD4 and TSG101. Interacts with host dynamin. Interacts with host NDUFAF4; the interaction inhibits viral propagation and is independent of interferon activation. Interacts with host GTF2H5; the interaction may inhibit host transcription. Phosphorylated by host.

Its subcellular location is the virion. It is found in the host endomembrane system. The protein localises to the host nucleus membrane. It localises to the host nucleus. The protein resides in the host cytoplasm. In terms of biological role, forms a double layer around the helical nucleocapsid, the inner matrix layer binding to the N helix and the outer matrix layer binding to the envelope glycoprotein. Plays a major role in assembly and budding of virion, by recruiting cellular partners of the ESCRT complexes that play a key role in releasing the budding particle from the host membrane. Condensates the ribonucleocapsid core during virus assembly. Inhibits the host mRNA nuclear export thereby inducing the shut off of cellular transcription and preventing the interferon signaling and the establishment of antiviral state in infected cells. This shutoff presumably inhibits interferon signaling and thus establishment of antiviral state in virus infected cells. Induces cell-rounding, cytoskeleton disorganization and apoptosis in infected cell. Inhibits host transcription, possibly through interaction with host DNA repair factor IIH/TFIIH GTF2H5 subunit. The sequence is that of Matrix protein (M) from Isfahan virus (ISFV).